The following is a 314-amino-acid chain: Carbamate kinase (314 aa).

Belongs to the carbamate kinase family. As to quaternary structure, homodimer.

It catalyses the reaction hydrogencarbonate + NH4(+) + ATP = carbamoyl phosphate + ADP + H2O + H(+). It participates in metabolic intermediate metabolism; carbamoyl phosphate degradation; CO(2) and NH(3) from carbamoyl phosphate: step 1/1. The chain is Carbamate kinase (CBK) from Trichomonas vaginalis.